Reading from the N-terminus, the 666-residue chain is UvrABC system protein B (666 aa).

In terms of domain architecture, Helicase ATP-binding spans 25–412; that stretch reads EQVQAGAPYQ…EEQIVEQVIR (388 aa). 38–45 is an ATP binding site; sequence GATGTGKT. The Beta-hairpin signature appears at 91 to 114; that stretch reads YYDYYQPEAYIPVTDTYIAKTASI. The Helicase C-terminal domain occupies 429–595; it reads QVDDLLAEIQ…PIIKRSSNAI (167 aa). In terms of domain architecture, UVR spans 626–661; the sequence is PNLITQLEAQMKEAAKNLEFEEAAQYRDRIKKLRER.

This sequence belongs to the UvrB family. As to quaternary structure, forms a heterotetramer with UvrA during the search for lesions. Interacts with UvrC in an incision complex.

The protein localises to the cytoplasm. The UvrABC repair system catalyzes the recognition and processing of DNA lesions. A damage recognition complex composed of 2 UvrA and 2 UvrB subunits scans DNA for abnormalities. Upon binding of the UvrA(2)B(2) complex to a putative damaged site, the DNA wraps around one UvrB monomer. DNA wrap is dependent on ATP binding by UvrB and probably causes local melting of the DNA helix, facilitating insertion of UvrB beta-hairpin between the DNA strands. Then UvrB probes one DNA strand for the presence of a lesion. If a lesion is found the UvrA subunits dissociate and the UvrB-DNA preincision complex is formed. This complex is subsequently bound by UvrC and the second UvrB is released. If no lesion is found, the DNA wraps around the other UvrB subunit that will check the other stand for damage. In Synechococcus sp. (strain ATCC 27144 / PCC 6301 / SAUG 1402/1) (Anacystis nidulans), this protein is UvrABC system protein B.